A 134-amino-acid chain; its full sequence is Replication enhancer protein (134 aa).

It belongs to the geminiviridae replication enhancer protein family. In terms of assembly, homooligomer. Interacts with the replication-associated protein (REP). Interacts with host proliferating cell nuclear antigen (PCNA). Interacts with host retinoblastoma-related protein 1 (RBR1), and may thereby deregulate the host cell cycle. Oligomerization and interaction with PCNA are necessary for optimal replication enhancement.

Functionally, increases viral DNA accumulation. Enhances infectivity and symptom expression. The polypeptide is Replication enhancer protein (African cassava mosaic virus (isolate West Kenyan 844) (ACMV)).